Consider the following 266-residue polypeptide: Nickel import ATP-binding protein NikE (266 aa).

An ABC transporter domain is found at 4 to 252 (ISADNIVKIY…RHPASRLLRE (249 aa)). 45–52 (GRSGCGKS) lines the ATP pocket.

The protein belongs to the ABC transporter superfamily. Nickel importer (TC 3.A.1.5.3) family. In terms of assembly, the complex is composed of two ATP-binding proteins (NikD and NikE), two transmembrane proteins (NikB and NikC) and a solute-binding protein (NikA).

It is found in the cell inner membrane. The enzyme catalyses Ni(2+)(out) + ATP + H2O = Ni(2+)(in) + ADP + phosphate + H(+). Part of the ABC transporter complex NikABCDE involved in nickel import. Responsible for energy coupling to the transport system. This Brucella suis biovar 1 (strain 1330) protein is Nickel import ATP-binding protein NikE.